The primary structure comprises 148 residues: FAD synthase (148 aa).

Residues 14 to 15 (VF), 19 to 22 (HVGH), and Asp-100 each bind ATP.

It belongs to the archaeal FAD synthase family. As to quaternary structure, homodimer. It depends on a divalent metal cation as a cofactor.

It carries out the reaction FMN + ATP + H(+) = FAD + diphosphate. It participates in cofactor biosynthesis; FAD biosynthesis; FAD from FMN: step 1/1. Catalyzes the transfer of the AMP portion of ATP to flavin mononucleotide (FMN) to produce flavin adenine dinucleotide (FAD) coenzyme. This Pyrococcus abyssi (strain GE5 / Orsay) protein is FAD synthase.